A 1637-amino-acid polypeptide reads, in one-letter code: Glutamate rich 3 (1637 aa).

Disordered regions lie at residues 145–192, 408–453, 478–814, 1111–1194, 1238–1445, and 1457–1637; these read PLTL…GSLL, PSST…KESC, EWKG…QDAG, VGTS…SPRE, IEKV…SGER, and KAEN…RETA. A compositionally biased stretch (polar residues) spans 169–185; it reads LLSSRQTRNGSKITSGS. 3 stretches are compositionally biased toward basic and acidic residues: residues 416 to 426, 443 to 452, and 478 to 487; these read EKITEKKEEPP, KRNEMERKES, and EWKGKSGRDV. Residues 500–523 show a composition bias toward acidic residues; sequence YEEDFEVDDEKQDEKVDEDEDQAD. Residues 534–557 show a composition bias toward basic and acidic residues; that stretch reads TESEKDNRNPEKKIETSSEKAHDS. A compositionally biased stretch (acidic residues) spans 558–572; the sequence is ENEDTGCSDSEEDDR. Low complexity-rich tracts occupy residues 579-590 and 608-617; these read SSISSRSHPYSS and EEGSSRSSSS. Basic and acidic residues-rich tracts occupy residues 619–638, 677–693, 769–802, 1115–1130, 1264–1307, 1319–1329, 1342–1357, and 1402–1412; these read DLRENDDPGKPHFPIEKYLE, ESEHKEPRRVASSEVRA, QEMHTLKEEAMKKDESSQPEDTDAHAGVREESGM, EVKEAEREVGSPKTDG, LKTE…KDVE, KLLEDPPKERA, SPKESEATATEHKGGE, and RCEEWAAKELD. Polar residues predominate over residues 1476 to 1487; it reads VTGSLTGQNWNM. 3 stretches are compositionally biased toward basic and acidic residues: residues 1550–1568, 1589–1599, and 1614–1637; these read AEERTGTEDMAPRTEKVAV, AQDREGGETKA, and GKDEEHQSGAAEEFRESVSQRETA.

The protein resides in the cell projection. It localises to the cilium. Its subcellular location is the cytoplasm. Its function is as follows. Component of the primary cilium that controls cilium formation and length. May function within retrograde intraflagellar transport (IFT)-associated pathways to remove signaling proteins from primary cilia. Also involved in neuronal vesicle biogenesis and neurotransmitter vesicular function. This chain is Glutamate rich 3, found in Mus musculus (Mouse).